Consider the following 399-residue polypeptide: Leu/Ile/Val-binding protein homolog 7 (399 aa).

An N-terminal signal peptide occupies residues 1–22 (MEKHLIALSVAALQAGAAPASA).

It belongs to the leucine-binding protein family.

Its function is as follows. Component of an amino-acid transport system. The polypeptide is Leu/Ile/Val-binding protein homolog 7 (Brucella abortus (strain 2308)).